A 475-amino-acid chain; its full sequence is Ornithine aminotransferase, mitochondrial (475 aa).

The transit peptide at 1-16 (MAATTRRLLYYVSKRF) directs the protein to the mitochondrion. Residues 23–43 (RSYGGLPQSNSKSPPSSSQRL) are disordered. Residues 29-41 (PQSNSKSPPSSSQ) are compositionally biased toward low complexity. Pyridoxal 5'-phosphate-binding positions include 142 to 143 (GA) and Phe-177. Arg-180 contributes to the L-ornithine binding site. Residue 265-268 (DEVQ) participates in pyridoxal 5'-phosphate binding. Lys-294 is subject to N6-(pyridoxal phosphate)lysine. Ser-323 serves as a coordination point for L-ornithine. Thr-324 serves as a coordination point for pyridoxal 5'-phosphate.

Belongs to the class-III pyridoxal-phosphate-dependent aminotransferase family. As to quaternary structure, homotetramer. It depends on pyridoxal 5'-phosphate as a cofactor.

It is found in the mitochondrion matrix. It catalyses the reaction a 2-oxocarboxylate + L-ornithine = L-glutamate 5-semialdehyde + an L-alpha-amino acid. The protein operates within amino-acid biosynthesis; L-proline biosynthesis; L-glutamate 5-semialdehyde from L-ornithine: step 1/1. Mediates degradation of arginine for nitrogen recycling. Plays a role in non-host disease resistance by regulating pyrroline-5-carboxylate metabolism-induced hypersensitive response. This Arabidopsis thaliana (Mouse-ear cress) protein is Ornithine aminotransferase, mitochondrial.